A 106-amino-acid polypeptide reads, in one-letter code: MDNPNIAIEVVYALADRQKLLRLSVPVGTTVREAALRSGMQQFFPELDLHHAPLGIFGKAVAKPEERVLEEGERVEIYRPLIADPKEVRKQRAAKAKTREEGEEPA.

The protein belongs to the UPF0125 (RnfH) family.

This Ectopseudomonas mendocina (strain ymp) (Pseudomonas mendocina) protein is Protein RnfH.